Here is a 543-residue protein sequence, read N- to C-terminus: CTP synthase (543 aa).

Residues 1–265 (MARYIFITGG…DGEVLRHFGL (265 aa)) form an amidoligase domain region. Position 13 (Ser-13) interacts with CTP. Position 13 (Ser-13) interacts with UTP. Residue 14-19 (SLGKGL) coordinates ATP. Tyr-54 provides a ligand contact to L-glutamine. Asp-71 contributes to the ATP binding site. Mg(2+)-binding residues include Asp-71 and Glu-139. CTP contacts are provided by residues 146 to 148 (DIE), 186 to 191 (KTKPTQ), and Lys-222. Residues 186–191 (KTKPTQ) and Lys-222 contribute to the UTP site. The Glutamine amidotransferase type-1 domain occupies 290–542 (TIGVVGKYVG…IAAAVKQARL (253 aa)). Gly-354 is an L-glutamine binding site. Residue Cys-381 is the Nucleophile; for glutamine hydrolysis of the active site. L-glutamine-binding positions include 382-385 (LGMQ), Glu-405, and Arg-470. Residues His-515 and Glu-517 contribute to the active site.

Belongs to the CTP synthase family. In terms of assembly, homotetramer.

The catalysed reaction is UTP + L-glutamine + ATP + H2O = CTP + L-glutamate + ADP + phosphate + 2 H(+). The enzyme catalyses L-glutamine + H2O = L-glutamate + NH4(+). It carries out the reaction UTP + NH4(+) + ATP = CTP + ADP + phosphate + 2 H(+). Its pathway is pyrimidine metabolism; CTP biosynthesis via de novo pathway; CTP from UDP: step 2/2. Its activity is regulated as follows. Allosterically activated by GTP, when glutamine is the substrate; GTP has no effect on the reaction when ammonia is the substrate. The allosteric effector GTP functions by stabilizing the protein conformation that binds the tetrahedral intermediate(s) formed during glutamine hydrolysis. Inhibited by the product CTP, via allosteric rather than competitive inhibition. Catalyzes the ATP-dependent amination of UTP to CTP with either L-glutamine or ammonia as the source of nitrogen. Regulates intracellular CTP levels through interactions with the four ribonucleotide triphosphates. This Novosphingobium aromaticivorans (strain ATCC 700278 / DSM 12444 / CCUG 56034 / CIP 105152 / NBRC 16084 / F199) protein is CTP synthase.